We begin with the raw amino-acid sequence, 122 residues long: Large ribosomal subunit protein uL14 (122 aa).

The protein belongs to the universal ribosomal protein uL14 family. In terms of assembly, part of the 50S ribosomal subunit. Forms a cluster with proteins L3 and L19. In the 70S ribosome, L14 and L19 interact and together make contacts with the 16S rRNA in bridges B5 and B8.

Its function is as follows. Binds to 23S rRNA. Forms part of two intersubunit bridges in the 70S ribosome. The sequence is that of Large ribosomal subunit protein uL14 from Geobacillus thermodenitrificans (strain NG80-2).